The chain runs to 509 residues: Proline-rich receptor-like protein kinase PERK15 (509 aa).

A disordered region spans residues 1 to 44; sequence MSTDTIPSLSSPPAPEFPSTTPDTATSPAPSQPSIIGPSSLAPF. Residues 1–61 lie on the Extracellular side of the membrane; sequence MSTDTIPSLS…DGGSRNVALT (61 aa). Residues 18 to 34 show a composition bias toward low complexity; sequence PSTTPDTATSPAPSQPS. The helical transmembrane segment at 62–82 threads the bilayer; that stretch reads GLITGVVLGATFVLLGVCIFV. At 83-509 the chain is on the cytoplasmic side; that stretch reads CFYKRKKRKL…IEPEKNTKDT (427 aa). Position 132 is a phosphothreonine (threonine 132). The 281-residue stretch at 143–423 folds into the Protein kinase domain; that stretch reads FSNTNLLGQG…VRAFEGNISI (281 aa). ATP contacts are provided by residues 149–157 and lysine 171; that span reads LGQGGFGYV. A Phosphotyrosine modification is found at tyrosine 216. The active-site Proton acceptor is aspartate 267. Serine 300 is modified (phosphoserine). 2 positions are modified to phosphothreonine: threonine 301 and threonine 306. A Phosphotyrosine modification is found at tyrosine 314. The segment covering 468–499 has biased composition (polar residues); the sequence is FGSSECSGLTSDNGQNPSGSSSITEGQRTTQE. The tract at residues 468–509 is disordered; sequence FGSSECSGLTSDNGQNPSGSSSITEGQRTTQEIEPEKNTKDT.

It belongs to the protein kinase superfamily. Ser/Thr protein kinase family. As to expression, mostly expressed in inflorescence bolts, and, to a lower extent, in flower buds and siliques.

The protein localises to the cell membrane. It carries out the reaction L-seryl-[protein] + ATP = O-phospho-L-seryl-[protein] + ADP + H(+). It catalyses the reaction L-threonyl-[protein] + ATP = O-phospho-L-threonyl-[protein] + ADP + H(+). This chain is Proline-rich receptor-like protein kinase PERK15 (PERK15), found in Arabidopsis thaliana (Mouse-ear cress).